Reading from the N-terminus, the 338-residue chain is Tetraacyldisaccharide 4'-kinase (338 aa).

67-74 contributes to the ATP binding site; the sequence is IAGGAGKT.

This sequence belongs to the LpxK family.

It catalyses the reaction a lipid A disaccharide + ATP = a lipid IVA + ADP + H(+). It functions in the pathway glycolipid biosynthesis; lipid IV(A) biosynthesis; lipid IV(A) from (3R)-3-hydroxytetradecanoyl-[acyl-carrier-protein] and UDP-N-acetyl-alpha-D-glucosamine: step 6/6. Transfers the gamma-phosphate of ATP to the 4'-position of a tetraacyldisaccharide 1-phosphate intermediate (termed DS-1-P) to form tetraacyldisaccharide 1,4'-bis-phosphate (lipid IVA). The polypeptide is Tetraacyldisaccharide 4'-kinase (Acidovorax sp. (strain JS42)).